A 746-amino-acid chain; its full sequence is Methyl-CpG-binding domain-containing protein 13 (746 aa).

2 consecutive short sequence motifs (nuclear localization signal) follow at residues 13–20 and 44–51; these read ERKVEIRV and IKKLEITN. The region spanning 29–104 is the MBD domain; it reads VIVEKSAAQG…KESDIEDDDS (76 aa). 6 disordered regions span residues 131 to 157, 169 to 283, 295 to 328, 348 to 479, 518 to 562, and 696 to 746; these read IDDV…MTSD, LGKK…PTPE, PLDD…KTRT, TKVQ…LKSP, TAAG…SGSA, and EPDT…FSKD. Positions 169-180 are enriched in basic and acidic residues; sequence LGKKEEVKDPIE. The segment covering 190-199 has biased composition (polar residues); the sequence is RSQTKASTTE. Basic and acidic residues predominate over residues 244–260; sequence SSEKRITRSKVEEKKNE. The short motif at 256 to 263 is the Nuclear localization signal element; that stretch reads EKKNELSN. Residues 427–451 show a composition bias toward polar residues; the sequence is VAQSCNEQSSQKPHAAAATSNNRVS. Positions 465 to 476 are enriched in basic residues; sequence VGRKPSKDKKTL. Polar residues-rich tracts occupy residues 529–546 and 702–730; these read PKAN…SPLR and KSQG…TNKT. The span at 732–746 shows a compositional bias: basic and acidic residues; that stretch reads GKPDDLRFTQSFSKD.

It localises to the nucleus. Its function is as follows. Probable transcriptional regulator. This is Methyl-CpG-binding domain-containing protein 13 (MBD13) from Arabidopsis thaliana (Mouse-ear cress).